The primary structure comprises 89 residues: MAHKKAGGSSRNGRDSAGKRLGIKTYGGEHVIPGNIIARQRGTTWHPGLNVGMGTDHTLFAKIEGHVQFRAKGNGRTFVSVLPIVAAAE.

A disordered region spans residues 1–23 (MAHKKAGGSSRNGRDSAGKRLGI).

Belongs to the bacterial ribosomal protein bL27 family.

The protein is Large ribosomal subunit protein bL27 of Rhodopseudomonas palustris (strain BisA53).